The following is a 61-amino-acid chain: Probable tautomerase SSP1389 (61 aa).

Pro-2 acts as the Proton acceptor; via imino nitrogen in catalysis.

The protein belongs to the 4-oxalocrotonate tautomerase family.

The sequence is that of Probable tautomerase SSP1389 from Staphylococcus saprophyticus subsp. saprophyticus (strain ATCC 15305 / DSM 20229 / NCIMB 8711 / NCTC 7292 / S-41).